The primary structure comprises 474 residues: MAAVQVRRRGRALALALWAGFALSVGGGVRARDGLATPPAFEGQAAPAVSWPCPPPADRLDDLALLEAIDLALCHSPALRQGWARIKARSAEVGLARAPYYPSVALSAGRSAQRRSTGLGEDGVRNNVMAVTLAWRLFDSGARSAALRAAQAQLDEAAQAYGAVLQDKLAEVVGAYYEAATARQALHTAVEDTEIARRSASIAARRARAGLDSHGDVLHAQAALERARLAQAQAEGAQARALAGLAQVLGVDPATPIVLAPGPLAPQRIEDRELAQWLRDARQRHPAIKAAQAGLAAATAQVDVARATDMPTVDLSLGHYRNSSENVSVFAGSSRSVSASLNLRIPLFDGFARRHRIQGARAEVQRQEALLDQARLATGAAVARAYADLRAARASHEASLRWLKAARAAYESDLRRYEAGVGGVAELLRAQSDWLSARQRHVLYAAQLRTRALALLAAAGELGRSTIDGDPPKE.

The N-terminal stretch at 1-31 (MAAVQVRRRGRALALALWAGFALSVGGGVRA) is a signal peptide.

It belongs to the outer membrane factor (OMF) (TC 1.B.17) family.

The protein localises to the cell outer membrane. Functionally, cyaE is necessary for transport of calmodulin-sensitive adenylate cyclase-hemolysin (cyclolysin). This chain is Protein CyaE (cyaE), found in Bordetella pertussis (strain Tohama I / ATCC BAA-589 / NCTC 13251).